The chain runs to 1003 residues: Serine/threonine-protein kinase spk-1 (1003 aa).

Disordered stretches follow at residues 92-112 (NSTN…TQNE), 169-309 (NEND…SATS), and 337-408 (RPSI…KRGG). Positions 202–211 (SDEEDVESQD) are enriched in acidic residues. Positions 248–265 (SNDDKNEKDVLVDEDTSK) are enriched in basic and acidic residues. Positions 285 to 300 (TIDSSVSSSTSSSSTG) are enriched in low complexity. Positions 346–359 (KKTEVNANEERLDD) are enriched in basic and acidic residues. In terms of domain architecture, Protein kinase spans 422 to 904 (YHVIRKLGWG…AKIALKHPFL (483 aa)). ATP-binding positions include 428 to 436 (LGWGHFSTV) and Lys451. Asp555 serves as the catalytic Proton acceptor. A disordered region spans residues 927 to 1003 (DGLIPEPFDG…DIERFQLDLQ (77 aa)). Basic and acidic residues predominate over residues 936–953 (GNEHQEVYRDENDSRSAS). Residues 954–964 (ERSANSRSAGG) show a composition bias toward low complexity. Positions 983-992 (VITNNETTDI) are enriched in polar residues. A compositionally biased stretch (basic and acidic residues) spans 994–1003 (DIERFQLDLQ).

It belongs to the protein kinase superfamily. Ser/Thr protein kinase family. Interacts with rsp-3. As to expression, predominantly coexpressed with rsp-3 in adult hermaphrodite germlines.

It carries out the reaction L-seryl-[protein] + ATP = O-phospho-L-seryl-[protein] + ADP + H(+). It catalyses the reaction L-threonyl-[protein] + ATP = O-phospho-L-threonyl-[protein] + ADP + H(+). In terms of biological role, required for embryogenesis and germline development in both adult hermaphrodites and males. SR-protein kinase (SRPK) that binds directly to and phosphorylates the RS domain of rsp-3/CeSF2 in vitro. The sequence is that of Serine/threonine-protein kinase spk-1 (spk-1) from Caenorhabditis elegans.